We begin with the raw amino-acid sequence, 285 residues long: ATP phosphoribosyltransferase (285 aa).

The protein belongs to the ATP phosphoribosyltransferase family. Long subfamily. Mg(2+) is required as a cofactor.

Its subcellular location is the cytoplasm. The enzyme catalyses 1-(5-phospho-beta-D-ribosyl)-ATP + diphosphate = 5-phospho-alpha-D-ribose 1-diphosphate + ATP. The protein operates within amino-acid biosynthesis; L-histidine biosynthesis; L-histidine from 5-phospho-alpha-D-ribose 1-diphosphate: step 1/9. With respect to regulation, feedback inhibited by histidine. Functionally, catalyzes the condensation of ATP and 5-phosphoribose 1-diphosphate to form N'-(5'-phosphoribosyl)-ATP (PR-ATP). Has a crucial role in the pathway because the rate of histidine biosynthesis seems to be controlled primarily by regulation of HisG enzymatic activity. The sequence is that of ATP phosphoribosyltransferase from Methanocella arvoryzae (strain DSM 22066 / NBRC 105507 / MRE50).